Here is a 512-residue protein sequence, read N- to C-terminus: Ankyrin repeat domain-containing protein SOWAHC (512 aa).

Phosphoserine is present on residues S82 and S125. Residues 126–248 (LGLGGEVSDQ…AEEESSVGAS (123 aa)) are disordered. Positions 173-186 (PPQGEAEGGSSPSG) are enriched in low complexity. S205 bears the Phosphoserine mark. The segment covering 214 to 228 (PGDGNAGGRSRGGGD) has biased composition (gly residues). Residues 229-248 (SDTASLASSSAEEESSVGAS) show a composition bias toward low complexity. ANK repeat units lie at residues 288 to 317 (TGFT…KHQL) and 327 to 357 (GGYT…DVDI). R395 is modified (omega-N-methylarginine). Residues 427 to 500 (HVPEGWTGGS…EERSLRGYSS (74 aa)) form a disordered region. Residues 453 to 462 (MKPRLNKIRF) show a composition bias toward basic residues. Positions 481–492 (EEGEEEEEEEEE) are enriched in acidic residues.

This sequence belongs to the SOWAH family.

The chain is Ankyrin repeat domain-containing protein SOWAHC (Sowahc) from Mus musculus (Mouse).